A 479-amino-acid polypeptide reads, in one-letter code: MPSPSVTSPQVAVNDIGSAEDFLAAIDKTIKYFNDGDIVEGTIVKVDRDEVLLDIGYKTEGVIPSRELSIKHDVDPNEVVSVGDEVEALVLTKEDKEGRLILSKKRAQYERAWGTIEELKEKDEAVKGTVIEVVKGGLILDIGLRGFLPASLVEMRRVRDLQPYIGKEIEAKIIELDKNRNNVVLSRRAWLEQTQSEVRSEFLNQLQKGAIRKGVVSSIVNFGAFVDLGGVDGLVHVSELSWKHIDHPSEVVQVGDEVTVEVLDVDMDRERVSLSLKATQEDPWRHFARTHAIGQIVPGKVTKLVPFGAFVRVEEGIEGLVHISELSERHVEVPDQVVQVGDDAMVKVIDIDLERRRISLSLKQANEDYTEEFDPSKYGMADSYDEQGNYIFPEGFDPETNEWLEGFDKQREEWEARYAEAERRHKMHTAQMEKFAAAEAEAANAPVSNGSSRSEESSGGTLASDAQLAALREKLAGNA.

S1 motif domains are found at residues Gly-36–Lys-105, Asp-123–Arg-188, Gly-209–Lys-277, and Gly-294–Lys-363. Residues Thr-429–Ala-466 form a disordered region. The span at Ala-437–Gly-460 shows a compositional bias: low complexity.

Belongs to the bacterial ribosomal protein bS1 family. Binds uncharacterized protein MSMEG_2731/MSMEI_2664.

Functionally, binds mRNA, facilitating recognition of most mRNAs by the 30S ribosomal subunit during translation initiation. Plays a role in trans-translation; binds tmRNA (the product of the ssrA gene). Binds very poorly to pyrazinoic acid (POA), the active form of the prodrug pyrazinamide (PZA); POA does not disrupt trans-translation in this organism. M.smegmatis is resistant to the antibiotic PZA. In trans-translation Ala-aminoacylated transfer-messenger RNA (tmRNA, product of the ssrA gene; the 2 termini fold to resemble tRNA(Ala) while it encodes a short internal open reading frame (the tag peptide)) acts like a tRNA, entering the A-site of the ribosome and displacing the stalled mRNA (which is subsequently degraded). The ribosome then switches to translate the ORF on the tmRNA, the nascent peptide is terminated with the 'tag peptide' encoded by the tmRNA and thus targeted for degradation. The protein is Small ribosomal subunit protein bS1 (rpsA) of Mycolicibacterium smegmatis (strain ATCC 700084 / mc(2)155) (Mycobacterium smegmatis).